Reading from the N-terminus, the 167-residue chain is CASP-like protein 3 (167 aa).

Over 1 to 2 (MK) the chain is Cytoplasmic. The chain crosses the membrane as a helical span at residues 3 to 23 (IIAIAPRIGAAVLSLVAFSVM). Residues 24–48 (ASTGERRSGAGSTFKVKFSDFQAYN) lie on the Extracellular side of the membrane. A helical membrane pass occupies residues 49–69 (YLIALNVILFVYSTVQLVMLV). The Cytoplasmic segment spans residues 70–80 (NSNHNSSFSSP). Residues 81 to 101 (FKWVLGVYICDQLLAFLLFSA) form a helical membrane-spanning segment. Topologically, residues 102 to 137 (SSSAATASELSRHGLHNIWPPACATWKLWTFCSKAE) are extracellular. The chain crosses the membrane as a helical span at residues 138-158 (AAVAMSFLSSFFIITSSILSG). The Cytoplasmic portion of the chain corresponds to 159 to 167 (YHLSKVPAV).

Belongs to the Casparian strip membrane proteins (CASP) family. As to quaternary structure, homodimer and heterodimers.

The protein localises to the cell membrane. The polypeptide is CASP-like protein 3 (Osmunda lancea (Fern)).